Consider the following 418-residue polypeptide: Serine hydroxymethyltransferase 2 (418 aa).

Residues leucine 121 and 125–127 (GHL) contribute to the (6S)-5,6,7,8-tetrahydrofolate site. At lysine 230 the chain carries N6-(pyridoxal phosphate)lysine. 355 to 357 (SPF) serves as a coordination point for (6S)-5,6,7,8-tetrahydrofolate.

It belongs to the SHMT family. As to quaternary structure, homodimer. It depends on pyridoxal 5'-phosphate as a cofactor.

Its subcellular location is the cytoplasm. It carries out the reaction (6R)-5,10-methylene-5,6,7,8-tetrahydrofolate + glycine + H2O = (6S)-5,6,7,8-tetrahydrofolate + L-serine. Its pathway is one-carbon metabolism; tetrahydrofolate interconversion. It functions in the pathway amino-acid biosynthesis; glycine biosynthesis; glycine from L-serine: step 1/1. Catalyzes the reversible interconversion of serine and glycine with tetrahydrofolate (THF) serving as the one-carbon carrier. This reaction serves as the major source of one-carbon groups required for the biosynthesis of purines, thymidylate, methionine, and other important biomolecules. Also exhibits THF-independent aldolase activity toward beta-hydroxyamino acids, producing glycine and aldehydes, via a retro-aldol mechanism. The polypeptide is Serine hydroxymethyltransferase 2 (Pseudomonas aeruginosa (strain ATCC 15692 / DSM 22644 / CIP 104116 / JCM 14847 / LMG 12228 / 1C / PRS 101 / PAO1)).